A 187-amino-acid polypeptide reads, in one-letter code: Probable chorismate pyruvate-lyase (187 aa).

Substrate-binding residues include R80, L118, and E170.

This sequence belongs to the UbiC family.

It localises to the cytoplasm. The enzyme catalyses chorismate = 4-hydroxybenzoate + pyruvate. It functions in the pathway cofactor biosynthesis; ubiquinone biosynthesis. In terms of biological role, removes the pyruvyl group from chorismate, with concomitant aromatization of the ring, to provide 4-hydroxybenzoate (4HB) for the ubiquinone pathway. The chain is Probable chorismate pyruvate-lyase from Pseudomonas fluorescens (strain ATCC BAA-477 / NRRL B-23932 / Pf-5).